The sequence spans 132 residues: MANINKLYSDIDPEMKMDWNKDVSRSLGLRSIKNSLLGIITTRKGSRPFDPEFGCDLSDQLFENMTPLTADTVERNIESAVRNYEPRIDKLAVNVIPVYDDYTLIVEIRFSVIDNPDDIEQIKLQLASSNRV.

This sequence belongs to the GpW/Gp25 family. In terms of assembly, homodimer. Interacts with gp53 and with the (gp6)2-gp7 heterotrimeric molecule; The gp25-(gp6)2-gp7 module is involved in sheath contraction. Part of the baseplate macromolecular complex which consists of gp5, gp5.4, gp27 (central spike complex); gp6, gp25, gp53 (inner baseplate); gp7, gp8 (intermediate baseplate); gp9, gp10, gp11, gp12 (peripheral); gp48 and gp54 (proximal region of the tail tube).

The protein localises to the virion. Functionally, baseplate protein that is located next to the tail tube (inner baseplate). Involved in sheath assembly. The gp25-(gp6)2-gp7 module is involved in sheath contraction. The protein is Baseplate wedge protein gp25 (25) of Enterobacteria phage T4 (Bacteriophage T4).